Here is a 72-residue protein sequence, read N- to C-terminus: ATP synthase subunit L (72 aa).

In terms of assembly, F-type ATP synthases have 2 components, the catalytic core F(1) and the membrane-embedded component F(0), linked together by a central stalk and a peripheral stalk. The central stalk, also called rotor shaft, is often seen as part of F(1). The peripheral stalk is seen as part of F(0). F(0) contains the membrane channel next to the rotor. F-type ATP synthases form dimers but each monomer functions independently in ATP generation. The dimer consists of 18 different polypeptides: ATP1 (subunit alpha, part of F(1), 3 molecules per monomer), ATP2 (subunit beta, part of F(1), 3 molecules per monomer), ATP3 (subunit gamma, part of the central stalk), ATP4 (subunit b, part of the peripheral stalk), ATP5/OSCP (subunit 5/OSCP, part of the peripheral stalk), ATP6 (subunit a, part of the peripheral stalk), ATP7 (subunit d, part of the peripheral stalk), ATP8 (subunit 8, part of the peripheral stalk), OLI1 (subunit c, part of the rotor, 10 molecules per monomer), ATP14 (subunit h, part of the peripheral stalk), ATP15 (subunit epsilon, part of the central stalk), ATP16 (subunit delta, part of the central stalk), ATP17 (subunit f, part of the peripheral stalk), ATP18 (subunit i/j, part of the peripheral stalk). Dimer-specific subunits are ATP19 (subunit k, at interface between monomers), ATP20 (subunit g, at interface between monomers), TIM11 (subunit e, at interface between monomers). Also contains subunit L.

It is found in the mitochondrion inner membrane. Its function is as follows. Mitochondrial membrane ATP synthase (F(1)F(0) ATP synthase or Complex V) produces ATP from ADP in the presence of a proton gradient across the membrane which is generated by electron transport complexes of the respiratory chain. F-type ATP synthases consist of two structural domains, F(1) - containing the extramembraneous catalytic core, and F(0) - containing the membrane proton channel, linked together by a central stalk and a peripheral stalk. During catalysis, ATP synthesis in the catalytic domain of F(1) is coupled via a rotary mechanism of the central stalk subunits to proton translocation. This chain is ATP synthase subunit L, found in Pichia angusta (Yeast).